A 340-amino-acid polypeptide reads, in one-letter code: Methionine import ATP-binding protein MetN (340 aa).

An ABC transporter domain is found at 8–246 (ISVKNLNKEI…PYSSITEELF (239 aa)). Residue 40 to 47 (GHSGSGKS) coordinates ATP.

It belongs to the ABC transporter superfamily. Methionine importer (TC 3.A.1.24) family. As to quaternary structure, the complex is composed of two ATP-binding proteins (MetN), two transmembrane proteins (MetI) and a solute-binding protein (MetQ).

The protein resides in the cell inner membrane. The catalysed reaction is L-methionine(out) + ATP + H2O = L-methionine(in) + ADP + phosphate + H(+). It carries out the reaction D-methionine(out) + ATP + H2O = D-methionine(in) + ADP + phosphate + H(+). Its function is as follows. Part of the ABC transporter complex MetNIQ involved in methionine import. Responsible for energy coupling to the transport system. The chain is Methionine import ATP-binding protein MetN from Chlamydia felis (strain Fe/C-56) (Chlamydophila felis).